The primary structure comprises 81 residues: Exodeoxyribonuclease 7 small subunit (81 aa).

The protein belongs to the XseB family. Heterooligomer composed of large and small subunits.

Its subcellular location is the cytoplasm. It catalyses the reaction Exonucleolytic cleavage in either 5'- to 3'- or 3'- to 5'-direction to yield nucleoside 5'-phosphates.. In terms of biological role, bidirectionally degrades single-stranded DNA into large acid-insoluble oligonucleotides, which are then degraded further into small acid-soluble oligonucleotides. This Nitratidesulfovibrio vulgaris (strain ATCC 29579 / DSM 644 / CCUG 34227 / NCIMB 8303 / VKM B-1760 / Hildenborough) (Desulfovibrio vulgaris) protein is Exodeoxyribonuclease 7 small subunit.